The chain runs to 688 residues: DNA-directed RNA polymerase subunit beta' (688 aa).

The Zn(2+) site is built by Cys69, Cys71, Cys87, and Cys90. Mg(2+)-binding residues include Asp493, Asp495, and Asp497.

The protein belongs to the RNA polymerase beta' chain family. RpoC1 subfamily. In terms of assembly, in plastids the minimal PEP RNA polymerase catalytic core is composed of four subunits: alpha, beta, beta', and beta''. When a (nuclear-encoded) sigma factor is associated with the core the holoenzyme is formed, which can initiate transcription. Mg(2+) is required as a cofactor. It depends on Zn(2+) as a cofactor.

The protein localises to the plastid. Its subcellular location is the chloroplast. The enzyme catalyses RNA(n) + a ribonucleoside 5'-triphosphate = RNA(n+1) + diphosphate. Functionally, DNA-dependent RNA polymerase catalyzes the transcription of DNA into RNA using the four ribonucleoside triphosphates as substrates. This Chloranthus spicatus (Chulantree) protein is DNA-directed RNA polymerase subunit beta'.